Reading from the N-terminus, the 355-residue chain is S-adenosylmethionine:tRNA ribosyltransferase-isomerase (355 aa).

The protein belongs to the QueA family. Monomer.

Its subcellular location is the cytoplasm. The enzyme catalyses 7-aminomethyl-7-carbaguanosine(34) in tRNA + S-adenosyl-L-methionine = epoxyqueuosine(34) in tRNA + adenine + L-methionine + 2 H(+). It functions in the pathway tRNA modification; tRNA-queuosine biosynthesis. Transfers and isomerizes the ribose moiety from AdoMet to the 7-aminomethyl group of 7-deazaguanine (preQ1-tRNA) to give epoxyqueuosine (oQ-tRNA). This chain is S-adenosylmethionine:tRNA ribosyltransferase-isomerase, found in Burkholderia orbicola (strain AU 1054).